A 1009-amino-acid chain; its full sequence is Cilia- and flagella-associated protein 70 (1009 aa).

Positions Asn-410–Pro-428 are enriched in basic and acidic residues. Residues Asn-410–Gly-457 are disordered. TPR repeat units follow at residues Pro-498–Arg-531, Ser-635–Asn-668, Leu-669–His-702, His-704–Asn-736, His-888–Cys-921, Thr-923–Asn-954, and Glu-956–Asp-988.

Belongs to the CFAP70 family.

The protein localises to the cell projection. Its subcellular location is the cilium. It localises to the flagellum. The protein resides in the cytoplasm. It is found in the cytoskeleton. The protein localises to the flagellum basal body. Its subcellular location is the cilium axoneme. Functionally, axoneme-binding protein that plays a role in the regulation of ciliary motility and cilium length. This chain is Cilia- and flagella-associated protein 70, found in Macaca fascicularis (Crab-eating macaque).